Consider the following 334-residue polypeptide: Glyceraldehyde-3-phosphate dehydrogenase B (334 aa).

Residues 12–13 (RI), aspartate 34, and serine 121 contribute to the NAD(+) site. Residues 149–151 (SCT), threonine 180, 209–210 (TG), and arginine 232 each bind D-glyceraldehyde 3-phosphate. Cysteine 150 (nucleophile) is an active-site residue. Residue asparagine 314 coordinates NAD(+).

Belongs to the glyceraldehyde-3-phosphate dehydrogenase family. As to quaternary structure, homotetramer.

The enzyme catalyses D-glyceraldehyde 3-phosphate + phosphate + NAD(+) = (2R)-3-phospho-glyceroyl phosphate + NADH + H(+). It participates in carbohydrate degradation; glycolysis; pyruvate from D-glyceraldehyde 3-phosphate: step 1/5. Glyceraldehyde-3-phosphate dehydrogenase; part of the gene cluster that mediates the biosynthesis of heptelidic acid (HA), a sesquiterpene lactone that acts as an inhibitor of glyceraldehyde-3-phosphatedehydrogenase (GAPDH) and a growth inhibitor of the salt-tolerant lactic acid bacteria in soy sauce brewing. The GAPDPH hepG/gdpB shows much higher resistance to HA than the GAPDH gpdA located outside of the cluster, but it does not seem to act in self-resistance. In Aspergillus oryzae (strain ATCC 42149 / RIB 40) (Yellow koji mold), this protein is Glyceraldehyde-3-phosphate dehydrogenase B.